The sequence spans 326 residues: tRNA-modifying protein YgfZ (326 aa).

Folate-binding residues include Trp-27 and Trp-189.

The protein belongs to the tRNA-modifying YgfZ family.

The protein localises to the cytoplasm. Its function is as follows. Folate-binding protein involved in regulating the level of ATP-DnaA and in the modification of some tRNAs. It is probably a key factor in regulatory networks that act via tRNA modification, such as initiation of chromosomal replication. The protein is tRNA-modifying protein YgfZ of Salmonella typhimurium (strain LT2 / SGSC1412 / ATCC 700720).